Here is a 202-residue protein sequence, read N- to C-terminus: Recombination protein RecR (202 aa).

The C4-type zinc-finger motif lies at 56–71 (CRVCGNLDSADPCSVC). One can recognise a Toprim domain in the interval 79–179 (GLICVVESVG…SVTRLAQGIP (101 aa)).

It belongs to the RecR family.

Its function is as follows. May play a role in DNA repair. It seems to be involved in an RecBC-independent recombinational process of DNA repair. It may act with RecF and RecO. This Granulibacter bethesdensis (strain ATCC BAA-1260 / CGDNIH1) protein is Recombination protein RecR.